The chain runs to 413 residues: NAD-dependent dihydropyrimidine dehydrogenase subunit PreT (413 aa).

An NAD(+)-binding site is contributed by glutamate 287.

This sequence belongs to the NADH dehydrogenase family. In terms of assembly, heterotetramer of 2 PreA and 2 PreT subunits.

The enzyme catalyses 5,6-dihydrouracil + NAD(+) = uracil + NADH + H(+). The catalysed reaction is 5,6-dihydrothymine + NAD(+) = thymine + NADH + H(+). Involved in pyrimidine base degradation. Catalyzes physiologically the reduction of uracil to 5,6-dihydrouracil (DHU) by using NADH as a specific cosubstrate. It also catalyzes the reverse reaction and the reduction of thymine to 5,6-dihydrothymine (DHT). In Salmonella typhimurium (strain LT2 / SGSC1412 / ATCC 700720), this protein is NAD-dependent dihydropyrimidine dehydrogenase subunit PreT (preT).